A 256-amino-acid chain; its full sequence is NH(3)-dependent NAD(+) synthetase (256 aa).

An ATP-binding site is contributed by 29 to 36 (GISGGIDS). Aspartate 35 contributes to the Mg(2+) binding site. Arginine 115 provides a ligand contact to deamido-NAD(+). Threonine 135 is a binding site for ATP. Glutamate 140 serves as a coordination point for Mg(2+). Positions 148 and 155 each coordinate deamido-NAD(+). Residues lysine 164 and serine 186 each contribute to the ATP site. 245-246 (HK) lines the deamido-NAD(+) pocket.

It belongs to the NAD synthetase family. In terms of assembly, homodimer.

The catalysed reaction is deamido-NAD(+) + NH4(+) + ATP = AMP + diphosphate + NAD(+) + H(+). The protein operates within cofactor biosynthesis; NAD(+) biosynthesis; NAD(+) from deamido-NAD(+) (ammonia route): step 1/1. Functionally, catalyzes the ATP-dependent amidation of deamido-NAD to form NAD. Uses ammonia as a nitrogen source. This chain is NH(3)-dependent NAD(+) synthetase, found in Methanosarcina mazei (strain ATCC BAA-159 / DSM 3647 / Goe1 / Go1 / JCM 11833 / OCM 88) (Methanosarcina frisia).